The sequence spans 151 residues: Transcriptional regulator MraZ (151 aa).

SpoVT-AbrB domains lie at 5 to 52 (ANAI…PLDE) and 81 to 124 (AVDL…DEDA).

Belongs to the MraZ family. Forms oligomers.

The protein resides in the cytoplasm. Its subcellular location is the nucleoid. In Pseudomonas fluorescens (strain SBW25), this protein is Transcriptional regulator MraZ.